Here is a 144-residue protein sequence, read N- to C-terminus: uncharacterized protein (144 aa).

A helical transmembrane segment spans residues 72–90 (VAIGTSLIVGAGVAMEVSV).

It to yeast YCL21w.

The protein resides in the membrane. This is an uncharacterized protein from Saccharomyces cerevisiae (strain ATCC 204508 / S288c) (Baker's yeast).